Reading from the N-terminus, the 282-residue chain is Acetylglutamate kinase (282 aa).

Substrate is bound by residues 62 to 63 (GG), R84, and N178.

This sequence belongs to the acetylglutamate kinase family. ArgB subfamily.

It localises to the cytoplasm. The catalysed reaction is N-acetyl-L-glutamate + ATP = N-acetyl-L-glutamyl 5-phosphate + ADP. It participates in amino-acid biosynthesis; L-arginine biosynthesis; N(2)-acetyl-L-ornithine from L-glutamate: step 2/4. In terms of biological role, catalyzes the ATP-dependent phosphorylation of N-acetyl-L-glutamate. The protein is Acetylglutamate kinase of Thermotoga sp. (strain RQ2).